We begin with the raw amino-acid sequence, 293 residues long: Digeranylgeranylglyceryl phosphate synthase (293 aa).

Transmembrane regions (helical) follow at residues 26-46, 50-70, 107-127, 140-160, 215-235, 237-257, and 273-293; these read LMYG…FSDL, LLGY…NDYF, FVAA…VSVL, FAGN…GSII, IASL…FLLP, FLFD…LIYV, and YRKV…AGAF.

This sequence belongs to the UbiA prenyltransferase family. DGGGP synthase subfamily. It depends on Mg(2+) as a cofactor.

It localises to the cell membrane. The catalysed reaction is sn-3-O-(geranylgeranyl)glycerol 1-phosphate + (2E,6E,10E)-geranylgeranyl diphosphate = 2,3-bis-O-(geranylgeranyl)-sn-glycerol 1-phosphate + diphosphate. It functions in the pathway membrane lipid metabolism; glycerophospholipid metabolism. Functionally, prenyltransferase that catalyzes the transfer of the geranylgeranyl moiety of geranylgeranyl diphosphate (GGPP) to the C2 hydroxyl of (S)-3-O-geranylgeranylglyceryl phosphate (GGGP). This reaction is the second ether-bond-formation step in the biosynthesis of archaeal membrane lipids. This chain is Digeranylgeranylglyceryl phosphate synthase, found in Archaeoglobus fulgidus (strain ATCC 49558 / DSM 4304 / JCM 9628 / NBRC 100126 / VC-16).